The primary structure comprises 535 residues: Peroxisomal membrane protein PEX29 (535 aa).

A run of 2 helical transmembrane segments spans residues 139–159 and 176–196; these read LSVP…SKPL and ILLL…PAYM. N239 carries an N-linked (GlcNAc...) asparagine glycan. A helical membrane pass occupies residues 247 to 267; the sequence is MLLYVMSYDFVTSLIVKYLYF. The N-linked (GlcNAc...) asparagine glycan is linked to N271. Transmembrane regions (helical) follow at residues 272–292 and 297–317; these read ITIF…LFGA and AMLP…TIAM. N450 and N515 each carry an N-linked (GlcNAc...) asparagine glycan. The tract at residues 511-535 is disordered; it reads AHRRNKSMESSNSLHPVKSIDSVDG.

It belongs to the PEX28-32 family. PEX29 subfamily.

Its subcellular location is the endoplasmic reticulum membrane. With PEX23, contributes to the formation of endoplasmic reticulum-mitochondria junctions which are important for mitochondrial function. Involved in lipid dropplets formation. The protein is Peroxisomal membrane protein PEX29 of Ogataea parapolymorpha (strain ATCC 26012 / BCRC 20466 / JCM 22074 / NRRL Y-7560 / DL-1) (Yeast).